Here is a 227-residue protein sequence, read N- to C-terminus: Uracil-DNA glycosylase (227 aa).

D65 acts as the Proton acceptor in catalysis.

It belongs to the uracil-DNA glycosylase (UDG) superfamily. UNG family.

Its subcellular location is the cytoplasm. The enzyme catalyses Hydrolyzes single-stranded DNA or mismatched double-stranded DNA and polynucleotides, releasing free uracil.. Its function is as follows. Excises uracil residues from the DNA which can arise as a result of misincorporation of dUMP residues by DNA polymerase or due to deamination of cytosine. The protein is Uracil-DNA glycosylase of Buchnera aphidicola subsp. Cinara cedri (strain Cc).